The chain runs to 433 residues: Homoserine O-acetyltransferase (433 aa).

An AB hydrolase-1 domain is found at 41–385; it reads NVVLVCHALT…HGHDAFLVEP (345 aa). Residues 55–74 are disordered; the sequence is VARSPAPERNEGTRGAGQAG. Ser-166 acts as the Nucleophile in catalysis. Position 237 (Arg-237) interacts with substrate. Residues Asp-345 and His-378 contribute to the active site. Residue Asp-379 participates in substrate binding. The interval 403–433 is disordered; that stretch reads RAVSDDGGGGGNDSARPERDHAPVHASLFKG.

This sequence belongs to the AB hydrolase superfamily. MetX family. As to quaternary structure, homodimer.

It localises to the cytoplasm. The enzyme catalyses L-homoserine + acetyl-CoA = O-acetyl-L-homoserine + CoA. Its pathway is amino-acid biosynthesis; L-methionine biosynthesis via de novo pathway; O-acetyl-L-homoserine from L-homoserine: step 1/1. Transfers an acetyl group from acetyl-CoA to L-homoserine, forming acetyl-L-homoserine. This is Homoserine O-acetyltransferase from Halorubrum lacusprofundi (strain ATCC 49239 / DSM 5036 / JCM 8891 / ACAM 34).